The sequence spans 179 residues: Inner membrane-spanning protein YciB (179 aa).

A run of 5 helical transmembrane segments spans residues 24 to 44, 49 to 69, 76 to 96, 121 to 141, and 151 to 171; these read TATGVLMAATVLQMGIIYAME, AMQKATLVLILLFGTLTLVLH, WKPTVLYGAMAIALAVALWAL, VAWIGYCLFMAAINGYVAAYF, and LWGYVFPIVFLVAQGLYISPH.

Belongs to the YciB family.

The protein resides in the cell inner membrane. Its function is as follows. Plays a role in cell envelope biogenesis, maintenance of cell envelope integrity and membrane homeostasis. The polypeptide is Inner membrane-spanning protein YciB (Variovorax paradoxus (strain S110)).